Reading from the N-terminus, the 95-residue chain is Large ribosomal subunit protein bL25 (95 aa).

The protein belongs to the bacterial ribosomal protein bL25 family. Part of the 50S ribosomal subunit; part of the 5S rRNA/L5/L18/L25 subcomplex. Contacts the 5S rRNA. Binds to the 5S rRNA independently of L5 and L18.

Its function is as follows. This is one of the proteins that binds to the 5S RNA in the ribosome where it forms part of the central protuberance. In Chromobacterium violaceum (strain ATCC 12472 / DSM 30191 / JCM 1249 / CCUG 213 / NBRC 12614 / NCIMB 9131 / NCTC 9757 / MK), this protein is Large ribosomal subunit protein bL25.